The following is a 486-amino-acid chain: Transcription factor aptf-4 (486 aa).

2 disordered regions span residues 25 to 49 and 150 to 173; these read CEPSPSSSSSRKRPADSENGNSAKM and LSTTSANFTPDWNTTTNGPCNQEK. The segment covering 150-169 has biased composition (polar residues); that stretch reads LSTTSANFTPDWNTTTNGPC. The tract at residues 301-430 is H-S-H (helix-span-helix), dimerization; sequence QRQRKVTCFS…IVEQAALYCE (130 aa).

It belongs to the AP-2 family. Binds DNA as a dimer.

Its subcellular location is the nucleus. Functionally, sequence-specific DNA-binding protein that interacts with enhancer elements to regulate transcription of selected genes. Required for neuroblast and epidermal morphogenesis, perhaps acting in cooperation with transcription factor aptf-2. The sequence is that of Transcription factor aptf-4 from Caenorhabditis elegans.